The chain runs to 64 residues: Conotoxin LiC121 (64 aa).

The signal sequence occupies residues 1-22 (MRCVPVFIILLLLSPSAPSVDA). The propeptide occupies 23–48 (HPKTKDDVPLASFHDDAKRTLQRLWI).

The protein belongs to the conotoxin T superfamily. In terms of processing, contains 2 disulfide bonds that can be either 'C1-C3, C2-C4' or 'C1-C4, C2-C3', since these disulfide connectivities have been observed for conotoxins with cysteine framework V (for examples, see AC P0DQQ7 and AC P81755). As to expression, expressed by the venom duct.

It localises to the secreted. The protein is Conotoxin LiC121 of Conus lividus (Livid cone).